Consider the following 253-residue polypeptide: ATP synthase subunit a (253 aa).

Transmembrane regions (helical) follow at residues 34–54 (SSLF…LSFY), 89–109 (YFPF…IGMI), 118–138 (HIVF…LIGI), 156–178 (LAIV…FTLS), 203–223 (LSAG…LLAL), and 226–246 (LELA…CIYL).

This sequence belongs to the ATPase A chain family. F-type ATPases have 2 components, CF(1) - the catalytic core - and CF(0) - the membrane proton channel. CF(1) has five subunits: alpha(3), beta(3), gamma(1), delta(1), epsilon(1). CF(0) has three main subunits: a, b and c.

It localises to the mitochondrion inner membrane. In terms of biological role, mitochondrial membrane ATP synthase (F(1)F(0) ATP synthase or Complex V) produces ATP from ADP in the presence of a proton gradient across the membrane which is generated by electron transport complexes of the respiratory chain. F-type ATPases consist of two structural domains, F(1) - containing the extramembraneous catalytic core and F(0) - containing the membrane proton channel, linked together by a central stalk and a peripheral stalk. During catalysis, ATP synthesis in the catalytic domain of F(1) is coupled via a rotary mechanism of the central stalk subunits to proton translocation. Key component of the proton channel; it may play a direct role in the translocation of protons across the membrane. The protein is ATP synthase subunit a (ATP6) of Chondrus crispus (Carrageen Irish moss).